We begin with the raw amino-acid sequence, 102 residues long: Defensin (102 aa).

Positions Met1–Ala25 are cleaved as a signal peptide. Residues Ala26 to Arg62 constitute a propeptide that is removed on maturation. Disulfide bonds link Cys65-Cys92, Cys78-Cys98, and Cys82-Cys100.

The protein belongs to the invertebrate defensin family. Type 1 subfamily.

The protein localises to the secreted. In terms of biological role, responsible for the anti Gram-positive activity of immune hemolymph. The polypeptide is Defensin (Def1) (Anopheles gambiae (African malaria mosquito)).